A 165-amino-acid chain; its full sequence is S-(2-succino)cysteine N-acetyltransferase (165 aa).

The 160-residue stretch at 3–162 (PRYRLAVERD…ITVYMKKQLR (160 aa)) folds into the N-acetyltransferase domain.

Belongs to the acetyltransferase family.

The catalysed reaction is S-(2-succino)-L-cysteine + acetyl-CoA = N-acetyl-S-(2-succino)-L-cysteine + CoA + H(+). Its pathway is amino-acid biosynthesis; L-cysteine biosynthesis. Catalyzes the N-acetylation of S-(2-succino)cysteine. Is involved in a S-(2-succino)cysteine (2SC) degradation pathway that allows B.subtilis to grow on 2SC as a sole sulfur source, via its metabolization to cysteine. Moreover, 2SC is a toxic compound in B.subtilis at high exogenous concentrations, and this enzyme relieves 2SC toxicity via N-acetylation. This is S-(2-succino)cysteine N-acetyltransferase from Bacillus subtilis (strain 168).